Consider the following 278-residue polypeptide: IMMAMKLEKENALEKAINLENQLKEKAKDFEKKEEEMNDWLSKVKNIQTEVDTVQESLQEAISKLEETEKRATNAEAEVAAMTRRIRLLEEDFEQSSGRLTETSTKLDDASKAAEESERNRKTLETRSISDDERMAQLEEQVKEAKYIAEDAERKYDEAARRLAVTEVDLERAESRLETSESKIVELEEELRIVGNNMKSLEVSEQESLQREESYEETIRDLTERLKTAEQRAAEAERQVSKLQNEVDRLEDELLSEKERYRAISGELDTTFAELTSF.

The stretch at 1–270 (IMMAMKLEKE…YRAISGELDT (270 aa)) forms a coiled coil. Positions 92-134 (DFEQSSGRLTETSTKLDDASKAAEESERNRKTLETRSISDDER) are disordered. The segment covering 95–104 (QSSGRLTETS) has biased composition (polar residues). Basic and acidic residues predominate over residues 105–134 (TKLDDASKAAEESERNRKTLETRSISDDER).

The protein belongs to the tropomyosin family. Homodimer.

In terms of biological role, tropomyosin, in association with the troponin complex, plays a central role in the calcium dependent regulation of muscle contraction. The protein is Tropomyosin A of Echinococcus granulosus (Hydatid tapeworm).